We begin with the raw amino-acid sequence, 518 residues long: MAENHAQNKAKLISETRRRFEAEYVTDKSDKYDARDVERLQQDDNWVESYLSWRHNIVDETLKMLDESFQWRKEISVNDLNESSIPRWLLEIGVIYLHGYDKEGNKLFWIRVKYHVKDQKTILDKKKLIAFWLERYAKRENGKPVTVMFDLSETGINSIDMDFVRFIINCFKVYYPKYLSKIVIFDMPWLMNAAFKIVKTWLGPEAVSLLKFTSKNEVQDYVSVEYLPPHMGGTDPFKYSYPPLVDDDFQTPLCENGPITSEDETSSKEDIESDGKETLETISNEEQTPLLKKINPTESTSKAEENEKVDSKVKAFKKPLSVFKGPLLHISPAEELYFGSTESGEKKTLIVLTNVTKNIVAFKVRTTAPEKYRVKPSNSSCDPGASVDIVVSPHGGLTVSAQDRFLIMAAEMEQSSGTGPAELTQFWKEVPRNKVMEHRLRCHTVESSKPNTLTLKDNAFNMSDKTSEDICLQLSRLLESNRKLEDQVQRCIWFQQLLLSLTMLLLAFVTSFFYLLYS.

Residues 1–496 (MAENHAQNKA…QVQRCIWFQQ (496 aa)) lie on the Cytoplasmic side of the membrane. In terms of domain architecture, CRAL-TRIO spans 82 to 239 (ESSIPRWLLE…HMGGTDPFKY (158 aa)). The interval 252–308 (PLCENGPITSEDETSSKEDIESDGKETLETISNEEQTPLLKKINPTESTSKAEENEK) is disordered. A compositionally biased stretch (basic and acidic residues) spans 265–279 (TSSKEDIESDGKETL). The MSP domain maps to 327–445 (LLHISPAEEL…MEHRLRCHTV (119 aa)). A required for FFAT motif binding and phosphorylated FFAT motif binding region spans residues 365–366 (RT). A helical; Anchor for type IV membrane protein transmembrane segment spans residues 497–518 (LLLSLTMLLLAFVTSFFYLLYS).

Homooligomer. Interacts (via MSP domain) with STARD3NL (via FFAT motif), RMDN3 (via FFAT motif), OSBPL1A (via FFAT motif) and CERT1 (via FFAT motif). Interacts (via MSP domain) with STARD3 (via phosphorylated FFAT motif); this interaction depends on the critical phosphorylation of STARD3 on 'Ser-209'. Interacts with RB1CC1 (via phosphorylated FFAT motif), MIGA2 (via phosphorylated FFAT motif) and OSBPL1A (via FFAT motif). As to expression, highly expressed in CD14(+) monocytes, and at lower levels in neutrophils. Does not show significant expression in B-cells or T-cells.

The protein localises to the endoplasmic reticulum membrane. Its function is as follows. Endoplasmic reticulum-anchored protein that mediates the formation of contact sites between the endoplasmic (ER) and endosomes, mitochondria or Golgi through interaction with conventional- and phosphorylated-FFAT-containing organelle-bound proteins. In addition, forms endoplasmic reticulum (ER)-lipid droplets (LDs) contacts through a direct protein-membrane interaction and participates in LDs homeostasis. The attachment mechanism involves an amphipathic helix that has an affinity for lipid packing defects present at the surface of LDs. Promotes migration of primary monocytes and neutrophils, in response to various chemokines. This is Motile sperm domain-containing protein 2 from Homo sapiens (Human).